The sequence spans 433 residues: Inositol hexakisphosphate kinase 1 (433 aa).

Residues 100–160 are disordered; that stretch reads ETVEQDDTPE…SPKVELHSHS (61 aa). The span at 113–123 shows a compositional bias: basic residues; it reads PRRKHSRRSLH. Residues 139–149 show a composition bias toward polar residues; sequence SFETSESSQET. Basic and acidic residues predominate over residues 150–160; it reads KSPKVELHSHS. Residue S151 is modified to Phosphoserine. Residue 220-228 coordinates substrate; it reads PCVLDLKMG. Residues 362–383 form a disordered region; sequence PLCGPSTSPSNTSLEAGPSSPP. Residues 366-375 show a composition bias toward polar residues; that stretch reads PSTSPSNTSL.

Belongs to the inositol phosphokinase (IPK) family.

It is found in the cytoplasm. The protein resides in the nucleus. The enzyme catalyses 1D-myo-inositol hexakisphosphate + ATP = 5-diphospho-1D-myo-inositol 1,2,3,4,6-pentakisphosphate + ADP. It catalyses the reaction 1-diphospho-1D-myo-inositol 2,3,4,5,6-pentakisphosphate + ATP + H(+) = 1,5-bis(diphospho)-1D-myo-inositol 2,3,4,6-tetrakisphosphate + ADP. Its function is as follows. Converts inositol hexakisphosphate (InsP6) to diphosphoinositol pentakisphosphate (InsP7/PP-InsP5). Converts 1,3,4,5,6-pentakisphosphate (InsP5) to PP-InsP4. The polypeptide is Inositol hexakisphosphate kinase 1 (Ip6k1) (Rattus norvegicus (Rat)).